We begin with the raw amino-acid sequence, 177 residues long: Large ribosomal subunit protein uL6 (177 aa).

Belongs to the universal ribosomal protein uL6 family. Part of the 50S ribosomal subunit.

This protein binds to the 23S rRNA, and is important in its secondary structure. It is located near the subunit interface in the base of the L7/L12 stalk, and near the tRNA binding site of the peptidyltransferase center. The sequence is that of Large ribosomal subunit protein uL6 from Shewanella baltica (strain OS223).